The primary structure comprises 231 residues: Ribonuclease HII (231 aa).

In terms of domain architecture, RNase H type-2 spans 38 to 227 (ELVAGGDEAG…IKSFYGQLKL (190 aa)). Positions 44, 45, and 136 each coordinate a divalent metal cation.

The protein belongs to the RNase HII family. Mn(2+) is required as a cofactor. Requires Mg(2+) as cofactor.

Its subcellular location is the cytoplasm. The enzyme catalyses Endonucleolytic cleavage to 5'-phosphomonoester.. Its function is as follows. Endonuclease that specifically degrades the RNA of RNA-DNA hybrids. This chain is Ribonuclease HII, found in Carboxydothermus hydrogenoformans (strain ATCC BAA-161 / DSM 6008 / Z-2901).